Here is a 1744-residue protein sequence, read N- to C-terminus: Retrotransposon-like protein 1 (1744 aa).

3 disordered regions span residues Met-1–Glu-416, Arg-823–Gly-859, and Ser-1287–Ser-1439. Low complexity predominate over residues Ser-19 to Ser-30. The span at Asn-31 to Ser-40 shows a compositional bias: polar residues. The segment covering Gly-41–Ala-80 has biased composition (low complexity). Over residues Asp-269–Gly-318 the composition is skewed to polar residues. Residues Ser-332–Glu-361 show a composition bias toward low complexity. Acidic residues-rich tracts occupy residues Ser-385 to Glu-407, Gly-837 to Pro-846, and Glu-1291 to Val-1437. The next 2 membrane-spanning stretches (helical) occupy residues Phe-1473–Leu-1493 and Leu-1520–Leu-1540.

In terms of tissue distribution, expressed in placenta and in various tissues in late-fetal stage.

Its subcellular location is the membrane. Plays an essential role in capillaries endothelial cells for the maintenance of feto-maternal interface and for development of the placenta. The protein is Retrotransposon-like protein 1 (Rtl1) of Mus musculus (Mouse).